Here is a 563-residue protein sequence, read N- to C-terminus: Arginine--tRNA ligase (563 aa).

The short motif at 120–130 is the 'HIGH' region element; it reads PNIAKPFHVGH.

This sequence belongs to the class-I aminoacyl-tRNA synthetase family. As to quaternary structure, monomer.

It localises to the cytoplasm. It catalyses the reaction tRNA(Arg) + L-arginine + ATP = L-arginyl-tRNA(Arg) + AMP + diphosphate. The sequence is that of Arginine--tRNA ligase from Clostridium botulinum (strain Alaska E43 / Type E3).